Reading from the N-terminus, the 204-residue chain is LexA repressor (204 aa).

The segment at residues 28-48 is a DNA-binding region (H-T-H motif); sequence VREIGQAVGLASSSTVHGHLS. Catalysis depends on for autocatalytic cleavage activity residues serine 126 and lysine 164.

Belongs to the peptidase S24 family. In terms of assembly, homodimer.

It carries out the reaction Hydrolysis of Ala-|-Gly bond in repressor LexA.. Functionally, represses a number of genes involved in the response to DNA damage (SOS response), including recA and lexA. In the presence of single-stranded DNA, RecA interacts with LexA causing an autocatalytic cleavage which disrupts the DNA-binding part of LexA, leading to derepression of the SOS regulon and eventually DNA repair. The polypeptide is LexA repressor (Bacillus mycoides (strain KBAB4) (Bacillus weihenstephanensis)).